A 360-amino-acid polypeptide reads, in one-letter code: Meiotic drive suppressor wtf13 (360 aa).

Polar residues-rich tracts occupy residues 1–10 and 58–70; these read MKNNYTSLKS and DSST…TNPN. 2 disordered regions span residues 1 to 20 and 37 to 75; these read MKNN…ELKT and EEEG…ERRQ. A run of 8 helical transmembrane segments spans residues 90–110, 120–140, 150–170, 186–206, 222–242, 246–266, 276–296, and 310–330; these read LLIS…CVNP, AFSV…FCFF, CIKV…ISLA, DLVV…FGCV, SSIS…IWTL, LFGL…TKGL, ATGY…LFFY, and FIGN…RGIA.

This sequence belongs to the WTF family. In terms of assembly, homomer. Interacts with other proteins that exhibit high sequence similarity.

It localises to the spore membrane. Its subcellular location is the vacuole membrane. In terms of biological role, acts as a suppressor component of the dual wtf meiotic drive system, and can suppress but not confer meiotic drive by compatible poisons. Wtf meiotic drive systems promote unequal transmission of alleles from the parental zygote to progeny spores by encoding a poison and an antidote from the same locus; the poison is trans-acting and forms toxic aggregates in all spores within an ascus, wherease the antidote is spore-specific and targets aggregates for degradation by the vacuole. Meiotic drive by wtf systems therefore lead to poisoning of all progeny that do not inherit the dual poison/antidote allele, or express a compatible antidote. The chain is Meiotic drive suppressor wtf13 from Schizosaccharomyces kambucha (Fission yeast).